The sequence spans 45 residues: Large ribosomal subunit protein bL34 (45 aa).

Belongs to the bacterial ribosomal protein bL34 family.

This is Large ribosomal subunit protein bL34 from Clavibacter michiganensis subsp. michiganensis (strain NCPPB 382).